The following is a 144-amino-acid chain: High mobility group B protein 2 (144 aa).

Composition is skewed to basic and acidic residues over residues 1 to 12 and 73 to 94; these read MKGAKSKTETRS and AGDK…KAEK. Disordered stretches follow at residues 1–42, 57–94, and 106–144; these read MKGA…KRPA, KKEN…KAEK, and YNKK…EDDD. A DNA-binding region (HMG box) is located at residues 38–107; the sequence is PKRPASAFFV…EYEKNIKAYN (70 aa). Ser125 is subject to Phosphoserine. Acidic residues predominate over residues 127–144; that stretch reads VNDEDDAEDGSEEEEDDD.

The protein belongs to the HMGB family. As to expression, mostly expressed in cotyledons, hypocotyls, leaves, and flowers (excluding pedicels), also present in roots and stems.

Its subcellular location is the nucleus. It localises to the cytoplasm. The protein resides in the cytosol. Binds preferentially double-stranded DNA. Confers sensitivity to salt and drought stresses. The polypeptide is High mobility group B protein 2 (HMGB2) (Arabidopsis thaliana (Mouse-ear cress)).